Here is a 345-residue protein sequence, read N- to C-terminus: S-adenosylmethionine:tRNA ribosyltransferase-isomerase (345 aa).

The protein belongs to the QueA family. As to quaternary structure, monomer.

The protein resides in the cytoplasm. The enzyme catalyses 7-aminomethyl-7-carbaguanosine(34) in tRNA + S-adenosyl-L-methionine = epoxyqueuosine(34) in tRNA + adenine + L-methionine + 2 H(+). It functions in the pathway tRNA modification; tRNA-queuosine biosynthesis. Functionally, transfers and isomerizes the ribose moiety from AdoMet to the 7-aminomethyl group of 7-deazaguanine (preQ1-tRNA) to give epoxyqueuosine (oQ-tRNA). The protein is S-adenosylmethionine:tRNA ribosyltransferase-isomerase of Alkalilimnicola ehrlichii (strain ATCC BAA-1101 / DSM 17681 / MLHE-1).